The following is a 165-amino-acid chain: Lipoprotein signal peptidase (165 aa).

The next 2 helical transmembrane spans lie at 64–84 and 88–108; these read LGRW…GAWM and GSRL…GNAV. Catalysis depends on residues Asp-118 and Asp-136. Residues 128–148 form a helical membrane-spanning segment; that stretch reads SWYVFNVADAGIVAGVAGLLV.

Belongs to the peptidase A8 family.

It is found in the cell inner membrane. The catalysed reaction is Release of signal peptides from bacterial membrane prolipoproteins. Hydrolyzes -Xaa-Yaa-Zaa-|-(S,diacylglyceryl)Cys-, in which Xaa is hydrophobic (preferably Leu), and Yaa (Ala or Ser) and Zaa (Gly or Ala) have small, neutral side chains.. It functions in the pathway protein modification; lipoprotein biosynthesis (signal peptide cleavage). Functionally, this protein specifically catalyzes the removal of signal peptides from prolipoproteins. In Methylobacterium sp. (strain 4-46), this protein is Lipoprotein signal peptidase.